Consider the following 626-residue polypeptide: Bifurcating [FeFe] hydrogenase beta subunit (626 aa).

198–201 (GGGG) provides a ligand contact to NAD(+). FMN is bound by residues Lys207 and 224–228 (NGDEG). Position 229 (Asp229) interacts with NAD(+). Residues 312–317 (FVCGEE) and 350–352 (INN) contribute to the FMN site. Residues Cys485, Cys488, Cys491, Cys531, Cys578, Cys581, Cys584, Cys588, Cys608, Cys611, Cys614, and Cys618 each contribute to the [4Fe-4S] cluster site. 4Fe-4S ferredoxin-type domains follow at residues 569–598 (KKYV…GERG) and 599–626 (KPYT…IELV).

The protein belongs to the complex I 51 kDa subunit family. In terms of assembly, heterotrimer composed of HydA (alpha subunit), HydB (beta subunit) and HydC (gamma subunit). Near neutral and acidic pH conditions favor oligomerization of the heterotrimeric holoenzyme. The cofactor is [2Fe-2S] cluster. [4Fe-4S] cluster is required as a cofactor. It depends on FMN as a cofactor.

It localises to the cytoplasm. The enzyme catalyses 2 H2 + 2 oxidized [2Fe-2S]-[ferredoxin] + NAD(+) = 2 reduced [2Fe-2S]-[ferredoxin] + NADH + 3 H(+). In terms of biological role, catalyzes the oxidation of the physiological electron carriers NADH and reduced ferredoxin, coupled to the production of H(2). Acts as a bifurcating [FeFe] hydrogenase, which uses the exergonic oxidation of reduced ferredoxin to drive the unfavorable oxidation of NADH to produce H(2). The beta subunit contains flavin- and NAD-binding sites and is potentially the site for NADH oxidation, with the subsequent shuttling of electrons to the alpha subunit. The protein is Bifurcating [FeFe] hydrogenase beta subunit of Thermotoga maritima (strain ATCC 43589 / DSM 3109 / JCM 10099 / NBRC 100826 / MSB8).